The sequence spans 5104 residues: Malformin synthetase mlfA (5104 aa).

Residues 225 to 616 (ERHAVNRPHS…CGRADTQVKL (392 aa)) are adenylation 1. Positions 757–830 (SRLEQEIQLA…EAASLAEVQE (74 aa)) constitute a Carrier 1 domain. Residue serine 791 is modified to O-(pantetheine 4'-phosphoryl)serine. Positions 868-1299 (EDVFPCTTMQ…ALNTLSLLQA (432 aa)) are condensation 1. An adenylation 2 region spans residues 1327–1716 (DRWVTRQPEG…GRKDTQVKLR (390 aa)). Residues 1854–1931 (TPASELERTL…QLAAEFGGPA (78 aa)) form the Carrier 2 domain. Residue serine 1891 is modified to O-(pantetheine 4'-phosphoryl)serine. 2 disordered regions span residues 1928–1961 (GGPA…DGVD) and 1998–2025 (TNKT…KVDS). 2 stretches are compositionally biased toward low complexity: residues 1934–1958 (SASS…STND) and 2003–2013 (SVSSSSSSSSS). The tract at residues 2066–2481 (EDIYPATPLQ…TVSYSDKEAL (416 aa)) is condensation 2. Residues 2504 to 2896 (VRTPHAPAVC…IGRRDGQLKL (393 aa)) are adenylation 3. Positions 3032–3108 (RPVTSQEREM…QLICHLNTIR (77 aa)) constitute a Carrier 3 domain. An O-(pantetheine 4'-phosphoryl)serine modification is found at serine 3069. Condensation regions lie at residues 3125–3590 (WVAL…TYDQ) and 3611–4029 (NIYP…EQLV). An adenylation 4 region spans residues 4054-4444 (HSSREAVCAW…VGRKDNQIKF (391 aa)). One can recognise a Carrier 4 domain in the interval 4578–4654 (MPSTAAERKM…DLSDQARSLI (77 aa)). An O-(pantetheine 4'-phosphoryl)serine modification is found at serine 4615. The segment at 4691 to 5018 (DVLPTTSFQR…LQTIVQHQNN (328 aa)) is condensation 5.

Belongs to the NRP synthetase family.

It functions in the pathway secondary metabolite biosynthesis. Functionally, nonribosomal peptide synthetase; part of the gene cluster that mediates the biosynthesis of malformins, cyclic pentapeptides with a disulfide bond between 2 consecutive cysteins, that show potential anti-tumor as well as antimalarial and antitrypanosomal properties. The nonribosomal peptide synthetase mlfA is responsible of the formation of the cyclic pentapeptide. The malformin biosynthesis clusters in malformin-producing fungi also contain enzymes involved in the formation of the disulfide bond between the two consecutive cysteins within malformins, in addition to additional tailoring enzymes such as methyltransferases or oxidoreductases. They are also composed of up to 4 major facilitator superfamily transporters, and transcription factors probably involved in the regulation of the expression of those clusters. This is Malformin synthetase mlfA from Aspergillus vadensis (strain CBS 113365 / IMI 142717 / IBT 24658).